Reading from the N-terminus, the 354-residue chain is UDP-3-O-acylglucosamine N-acyltransferase (354 aa).

His-245 serves as the catalytic Proton acceptor.

The protein belongs to the transferase hexapeptide repeat family. LpxD subfamily. Homotrimer.

It carries out the reaction a UDP-3-O-[(3R)-3-hydroxyacyl]-alpha-D-glucosamine + a (3R)-hydroxyacyl-[ACP] = a UDP-2-N,3-O-bis[(3R)-3-hydroxyacyl]-alpha-D-glucosamine + holo-[ACP] + H(+). It participates in bacterial outer membrane biogenesis; LPS lipid A biosynthesis. Functionally, catalyzes the N-acylation of UDP-3-O-acylglucosamine using 3-hydroxyacyl-ACP as the acyl donor. Is involved in the biosynthesis of lipid A, a phosphorylated glycolipid that anchors the lipopolysaccharide to the outer membrane of the cell. This is UDP-3-O-acylglucosamine N-acyltransferase from Anaeromyxobacter dehalogenans (strain 2CP-C).